The primary structure comprises 606 residues: Kelch-like protein 41 (606 aa).

Ser3 carries the phosphoserine modification. Residues 33 to 100 (IDCTLKAGDK…LYSASIDLND (68 aa)) enclose the BTB domain. Residues 135–237 (CLAILRLGLL…TEKYFKDHVE (103 aa)) form the BACK domain. Kelch repeat units lie at residues 346 to 398 (QIYV…EVDD), 399 to 447 (KIYV…SHKG), 448 to 495 (MIYC…VHKG), 497 to 542 (IVIA…SLAG), and 544 to 599 (LYAI…TRLN).

As to quaternary structure, interacts with NRAP. Interacts with LASP1. Part of a complex that contains CUL3, RBX1 and KLHL41. Post-translationally, ubiquitinated by E3 ubiquitin ligase complex formed by CUL3 and RBX1 and probably targeted for proteasome-independent degradation. Quinone-induced oxidative stress increases its ubiquitination. In terms of tissue distribution, sarcomeric muscle.

It is found in the cytoplasm. The protein localises to the cytoskeleton. The protein resides in the cell projection. It localises to the pseudopodium. Its subcellular location is the ruffle. It is found in the myofibril. The protein localises to the sarcomere. The protein resides in the m line. It localises to the sarcoplasmic reticulum membrane. Its subcellular location is the endoplasmic reticulum membrane. In terms of biological role, involved in skeletal muscle development and differentiation. Regulates proliferation and differentiation of myoblasts and plays a role in myofibril assembly by promoting lateral fusion of adjacent thin fibrils into mature, wide myofibrils. Required for pseudopod elongation in transformed cells. The sequence is that of Kelch-like protein 41 (KLHL41) from Homo sapiens (Human).